A 405-amino-acid polypeptide reads, in one-letter code: Tryptophan synthase beta chain (405 aa).

K98 is subject to N6-(pyridoxal phosphate)lysine.

This sequence belongs to the TrpB family. Tetramer of two alpha and two beta chains. It depends on pyridoxal 5'-phosphate as a cofactor.

It carries out the reaction (1S,2R)-1-C-(indol-3-yl)glycerol 3-phosphate + L-serine = D-glyceraldehyde 3-phosphate + L-tryptophan + H2O. It participates in amino-acid biosynthesis; L-tryptophan biosynthesis; L-tryptophan from chorismate: step 5/5. The beta subunit is responsible for the synthesis of L-tryptophan from indole and L-serine. In Xanthomonas oryzae pv. oryzae (strain PXO99A), this protein is Tryptophan synthase beta chain.